The sequence spans 268 residues: 4-hydroxy-tetrahydrodipicolinate reductase (268 aa).

NAD(+)-binding positions include 8-13 (GAAGRM) and Asp35. Position 36 (Arg36) interacts with NADP(+). NAD(+) is bound by residues 99–101 (GTT) and 123–126 (AANF). His156 serves as the catalytic Proton donor/acceptor. His157 lines the (S)-2,3,4,5-tetrahydrodipicolinate pocket. Lys160 serves as the catalytic Proton donor. (S)-2,3,4,5-tetrahydrodipicolinate is bound at residue 166-167 (GT).

This sequence belongs to the DapB family.

It is found in the cytoplasm. The enzyme catalyses (S)-2,3,4,5-tetrahydrodipicolinate + NAD(+) + H2O = (2S,4S)-4-hydroxy-2,3,4,5-tetrahydrodipicolinate + NADH + H(+). It catalyses the reaction (S)-2,3,4,5-tetrahydrodipicolinate + NADP(+) + H2O = (2S,4S)-4-hydroxy-2,3,4,5-tetrahydrodipicolinate + NADPH + H(+). The protein operates within amino-acid biosynthesis; L-lysine biosynthesis via DAP pathway; (S)-tetrahydrodipicolinate from L-aspartate: step 4/4. Functionally, catalyzes the conversion of 4-hydroxy-tetrahydrodipicolinate (HTPA) to tetrahydrodipicolinate. This chain is 4-hydroxy-tetrahydrodipicolinate reductase, found in Pseudomonas aeruginosa (strain LESB58).